A 257-amino-acid polypeptide reads, in one-letter code: Acyl-[acyl-carrier-protein]--UDP-N-acetylglucosamine O-acyltransferase (257 aa).

The protein belongs to the transferase hexapeptide repeat family. LpxA subfamily. Homotrimer.

It is found in the cytoplasm. It catalyses the reaction a (3R)-hydroxyacyl-[ACP] + UDP-N-acetyl-alpha-D-glucosamine = a UDP-3-O-[(3R)-3-hydroxyacyl]-N-acetyl-alpha-D-glucosamine + holo-[ACP]. The protein operates within glycolipid biosynthesis; lipid IV(A) biosynthesis; lipid IV(A) from (3R)-3-hydroxytetradecanoyl-[acyl-carrier-protein] and UDP-N-acetyl-alpha-D-glucosamine: step 1/6. Functionally, involved in the biosynthesis of lipid A, a phosphorylated glycolipid that anchors the lipopolysaccharide to the outer membrane of the cell. The polypeptide is Acyl-[acyl-carrier-protein]--UDP-N-acetylglucosamine O-acyltransferase (Anaeromyxobacter sp. (strain K)).